The sequence spans 293 residues: Acetyl-coenzyme A carboxylase carboxyl transferase subunit beta (293 aa).

The CoA carboxyltransferase N-terminal domain maps to leucine 29 to lysine 293. Zn(2+)-binding residues include cysteine 33, cysteine 36, cysteine 52, and cysteine 55. The segment at cysteine 33 to cysteine 55 adopts a C4-type zinc-finger fold.

The protein belongs to the AccD/PCCB family. As to quaternary structure, acetyl-CoA carboxylase is a heterohexamer composed of biotin carboxyl carrier protein (AccB), biotin carboxylase (AccC) and two subunits each of ACCase subunit alpha (AccA) and ACCase subunit beta (AccD). Zn(2+) is required as a cofactor.

The protein localises to the cytoplasm. The enzyme catalyses N(6)-carboxybiotinyl-L-lysyl-[protein] + acetyl-CoA = N(6)-biotinyl-L-lysyl-[protein] + malonyl-CoA. It participates in lipid metabolism; malonyl-CoA biosynthesis; malonyl-CoA from acetyl-CoA: step 1/1. Functionally, component of the acetyl coenzyme A carboxylase (ACC) complex. Biotin carboxylase (BC) catalyzes the carboxylation of biotin on its carrier protein (BCCP) and then the CO(2) group is transferred by the transcarboxylase to acetyl-CoA to form malonyl-CoA. The chain is Acetyl-coenzyme A carboxylase carboxyl transferase subunit beta from Prochlorococcus marinus (strain MIT 9303).